Consider the following 217-residue polypeptide: t-SNARE VTI1 (217 aa).

At S2 the chain carries N-acetylserine. Over 2–194 (SSLLISYESD…TMTRRLVANK (193 aa)) the chain is Cytoplasmic. Phosphoserine occurs at positions 110 and 149. Residues 124–186 (HAILQKSGDR…DKSIKTLKTM (63 aa)) enclose the t-SNARE coiled-coil homology domain. A helical; Anchor for type IV membrane protein transmembrane segment spans residues 195–215 (FISYAIIAVLILLILLVLFSK). At 216-217 (FK) the chain is on the vesicular side.

It belongs to the VTI1 family. In terms of assembly, forms SNARE complexes with the t-SNAREs VAM3 and VAM7, and the v-SNAREs NYV1 and YKT6 on vacuolar membranes, which are involved in biosynthetic transport pathways to the vacuole and in homotypic vacuole fusion. Forms SNARE complexes with the cis-Golgi t-SNARE SED5 and the v-SNAREs SFT1 and YTK6, which are involved in retrograde traffic to the cis-Golgi compartment. Forms SNARE complexes with the t-SNAREs TLG1 and TLG2, and either the v-SNARE SNC1 or SNC2, which are involved in traffic from early endosomes to the trans-Golgi network (TGN). Forms SNARE complexes with the t-SNAREs PEP12 and either SYN8 or TLG1, and the v-SNARE SNC1, which are involved in traffic from the TGN to the prevacuolar compartment (PVC).

The protein localises to the prevacuolar compartment membrane. It localises to the golgi apparatus membrane. T-SNARE found in various SNARE complexes involved in multiple transport pathways. The composition of the t-SNARE complexes is specific for a limited number of v-SNAREs and therefore allows only the vesicles carrying the matching v-SNARE to fuse. The protein is t-SNARE VTI1 (VTI1) of Saccharomyces cerevisiae (strain ATCC 204508 / S288c) (Baker's yeast).